The following is a 108-amino-acid chain: Iron-sulfur cluster assembly protein CyaY (108 aa).

This sequence belongs to the frataxin family.

In terms of biological role, involved in iron-sulfur (Fe-S) cluster assembly. May act as a regulator of Fe-S biogenesis. This Burkholderia ambifaria (strain MC40-6) protein is Iron-sulfur cluster assembly protein CyaY.